The primary structure comprises 195 residues: Peroxiredoxin (195 aa).

The 159-residue stretch at 4–162 (AMIGKPAPEF…TLRLVQAFQF (159 aa)) folds into the Thioredoxin domain. The Cysteine sulfenic acid (-SOH) intermediate role is filled by cysteine 49.

It belongs to the peroxiredoxin family. AhpC/Prx1 subfamily. In terms of assembly, homodimer; disulfide-linked, upon oxidation.

The enzyme catalyses a hydroperoxide + [thioredoxin]-dithiol = an alcohol + [thioredoxin]-disulfide + H2O. Functionally, thiol-specific peroxidase that catalyzes the reduction of hydrogen peroxide and organic hydroperoxides to water and alcohols, respectively. Plays a role in cell protection against oxidative stress by detoxifying peroxides and as sensor of hydrogen peroxide-mediated signaling events. This chain is Peroxiredoxin, found in Ascaris suum (Pig roundworm).